We begin with the raw amino-acid sequence, 221 residues long: uncharacterized protein (221 aa).

This is an uncharacterized protein from Treponema pallidum (strain Nichols).